A 385-amino-acid chain; its full sequence is Digeranylgeranylglycerophospholipid reductase 2 (385 aa).

Positions 13, 32, 43, 44, 46, 95, 119, 273, 285, and 286 each coordinate FAD.

It belongs to the geranylgeranyl reductase family. DGGGPL reductase subfamily. FAD is required as a cofactor.

The enzyme catalyses a 2,3-bis-O-phytanyl-sn-glycerol 1-phospholipid + 8 A = a 2,3-bis-O-(geranylgeranyl)-sn-glycerol 1-phospholipid + 8 AH2. It carries out the reaction 2,3-bis-O-(phytanyl)-sn-glycerol 1-phosphate + 8 A = 2,3-bis-O-(geranylgeranyl)-sn-glycerol 1-phosphate + 8 AH2. The catalysed reaction is CDP-2,3-bis-O-(geranylgeranyl)-sn-glycerol + 8 AH2 = CDP-2,3-bis-O-(phytanyl)-sn-glycerol + 8 A. It catalyses the reaction archaetidylserine + 8 AH2 = 2,3-bis-O-phytanyl-sn-glycero-3-phospho-L-serine + 8 A. Its pathway is membrane lipid metabolism; glycerophospholipid metabolism. In terms of biological role, is involved in the reduction of 2,3-digeranylgeranylglycerophospholipids (unsaturated archaeols) into 2,3-diphytanylglycerophospholipids (saturated archaeols) in the biosynthesis of archaeal membrane lipids. Catalyzes the formation of archaetidic acid (2,3-di-O-phytanyl-sn-glyceryl phosphate) from 2,3-di-O-geranylgeranylglyceryl phosphate (DGGGP) via the hydrogenation of each double bond of the isoprenoid chains. Is also probably able to reduce double bonds of geranyl groups in CDP-2,3-bis-O-(geranylgeranyl)-sn-glycerol and archaetidylserine, thus acting at various stages in the biosynthesis of archaeal membrane lipids. This Methanothermobacter thermautotrophicus (strain ATCC 29096 / DSM 1053 / JCM 10044 / NBRC 100330 / Delta H) (Methanobacterium thermoautotrophicum) protein is Digeranylgeranylglycerophospholipid reductase 2.